The chain runs to 146 residues: Hemoglobin subunit beta (146 aa).

Valine 1 is subject to N-acetylvaline. The Globin domain maps to 2–146 (HLTGEEKSLV…VANALAHKYH (145 aa)). Phosphothreonine is present on threonine 12. Serine 44 carries the phosphoserine modification. Lysine 59 is modified (N6-acetyllysine). Heme b is bound at residue histidine 63. Lysine 82 is modified (N6-acetyllysine). Residue histidine 92 participates in heme b binding. Cysteine 93 carries the post-translational modification S-nitrosocysteine. Lysine 144 carries the post-translational modification N6-acetyllysine.

Belongs to the globin family. As to quaternary structure, heterotetramer of two alpha chains and two beta chains. In terms of tissue distribution, red blood cells.

Functionally, involved in oxygen transport from the lung to the various peripheral tissues. The chain is Hemoglobin subunit beta (HBB) from Ursus maritimus (Polar bear).